The following is a 263-amino-acid chain: Shikimate dehydrogenase (NADP(+)) (263 aa).

Shikimate-binding positions include 14-16 (SLS) and Thr60. Lys64 functions as the Proton acceptor in the catalytic mechanism. The shikimate site is built by Asn85 and Asp100. Residues 123-127 (GAGGA), 146-151 (NRTPQR), and Leu205 contribute to the NADP(+) site. Residue Tyr207 coordinates shikimate. NADP(+) is bound at residue Gly228. Gln235 lines the shikimate pocket.

The protein belongs to the shikimate dehydrogenase family. Homodimer.

The catalysed reaction is shikimate + NADP(+) = 3-dehydroshikimate + NADPH + H(+). It functions in the pathway metabolic intermediate biosynthesis; chorismate biosynthesis; chorismate from D-erythrose 4-phosphate and phosphoenolpyruvate: step 4/7. Functionally, involved in the biosynthesis of the chorismate, which leads to the biosynthesis of aromatic amino acids. Catalyzes the reversible NADPH linked reduction of 3-dehydroshikimate (DHSA) to yield shikimate (SA). This chain is Shikimate dehydrogenase (NADP(+)), found in Thermus thermophilus (strain ATCC 27634 / DSM 579 / HB8).